The following is a 147-amino-acid chain: Large ribosomal subunit protein uL15 (147 aa).

The segment at 16–63 is disordered; the sequence is SSRARVGRGIGSGLGKTAGRGHKGSFARKGGGKIKPGFEGGQTPMQRR. Gly residues predominate over residues 23-33; the sequence is RGIGSGLGKTA. Basic residues predominate over residues 34 to 47; that stretch reads GRGHKGSFARKGGG.

Belongs to the universal ribosomal protein uL15 family. As to quaternary structure, part of the 50S ribosomal subunit.

Its function is as follows. Binds to the 23S rRNA. In Xylella fastidiosa (strain Temecula1 / ATCC 700964), this protein is Large ribosomal subunit protein uL15.